We begin with the raw amino-acid sequence, 512 residues long: 2,3-bisphosphoglycerate-independent phosphoglycerate mutase (512 aa).

Mn(2+) contacts are provided by D11 and S61. S61 functions as the Phosphoserine intermediate in the catalytic mechanism. Substrate is bound by residues H122, 152-153, R184, R190, 259-262, and K332; these read RD and RADR. Positions 399, 403, 440, 441, and 459 each coordinate Mn(2+).

The protein belongs to the BPG-independent phosphoglycerate mutase family. Monomer. The cofactor is Mn(2+).

It carries out the reaction (2R)-2-phosphoglycerate = (2R)-3-phosphoglycerate. It participates in carbohydrate degradation; glycolysis; pyruvate from D-glyceraldehyde 3-phosphate: step 3/5. In terms of biological role, catalyzes the interconversion of 2-phosphoglycerate and 3-phosphoglycerate. The polypeptide is 2,3-bisphosphoglycerate-independent phosphoglycerate mutase (Francisella tularensis subsp. tularensis (strain WY96-3418)).